We begin with the raw amino-acid sequence, 130 residues long: Small ribosomal subunit protein uS8 (130 aa).

The protein belongs to the universal ribosomal protein uS8 family. In terms of assembly, part of the 30S ribosomal subunit. Contacts proteins S5 and S12.

Functionally, one of the primary rRNA binding proteins, it binds directly to 16S rRNA central domain where it helps coordinate assembly of the platform of the 30S subunit. The sequence is that of Small ribosomal subunit protein uS8 from Wigglesworthia glossinidia brevipalpis.